A 459-amino-acid polypeptide reads, in one-letter code: ATP synthase subunit beta (459 aa).

148-155 (GGAGVGKT) is an ATP binding site.

This sequence belongs to the ATPase alpha/beta chains family. In terms of assembly, F-type ATPases have 2 components, CF(1) - the catalytic core - and CF(0) - the membrane proton channel. CF(1) has five subunits: alpha(3), beta(3), gamma(1), delta(1), epsilon(1). CF(0) has three main subunits: a(1), b(2) and c(9-12). The alpha and beta chains form an alternating ring which encloses part of the gamma chain. CF(1) is attached to CF(0) by a central stalk formed by the gamma and epsilon chains, while a peripheral stalk is formed by the delta and b chains.

The protein localises to the cell inner membrane. The enzyme catalyses ATP + H2O + 4 H(+)(in) = ADP + phosphate + 5 H(+)(out). Produces ATP from ADP in the presence of a proton gradient across the membrane. The catalytic sites are hosted primarily by the beta subunits. This is ATP synthase subunit beta from Cellvibrio japonicus (strain Ueda107) (Pseudomonas fluorescens subsp. cellulosa).